A 299-amino-acid polypeptide reads, in one-letter code: Nucleotide-binding protein RER_30260 (299 aa).

ATP is bound at residue 19-26 (GLSGAGLS). A GTP-binding site is contributed by 70 to 73 (DVRS).

It belongs to the RapZ-like family.

Functionally, displays ATPase and GTPase activities. This is Nucleotide-binding protein RER_30260 from Rhodococcus erythropolis (strain PR4 / NBRC 100887).